The primary structure comprises 226 residues: MNLLIPAAGIGRRMGGSRNKLLLTLLGKSLLSWTLEAAVKSDHITWIGIIGQPIDFPDFQKNISDLSTDKHIELIEGGATRQESVYNGLQALPSAAERVLIHDGARCLATPELLDRCAVEILKCPGIIASVPVKDTIKVVDPSGIIQDTPNRRNLWAAQTPQGFDVKLLKECHKKGQILGWEVTDDAALFEKCGLPVKILEGEETNLKVTTPLDLKIAEFILLKAL.

The protein belongs to the IspD/TarI cytidylyltransferase family. IspD subfamily.

The enzyme catalyses 2-C-methyl-D-erythritol 4-phosphate + CTP + H(+) = 4-CDP-2-C-methyl-D-erythritol + diphosphate. The protein operates within isoprenoid biosynthesis; isopentenyl diphosphate biosynthesis via DXP pathway; isopentenyl diphosphate from 1-deoxy-D-xylulose 5-phosphate: step 2/6. Its function is as follows. Catalyzes the formation of 4-diphosphocytidyl-2-C-methyl-D-erythritol from CTP and 2-C-methyl-D-erythritol 4-phosphate (MEP). The chain is 2-C-methyl-D-erythritol 4-phosphate cytidylyltransferase from Trichodesmium erythraeum (strain IMS101).